A 474-amino-acid polypeptide reads, in one-letter code: Proline--tRNA ligase (474 aa).

It belongs to the class-II aminoacyl-tRNA synthetase family. ProS type 3 subfamily. Homodimer.

Its subcellular location is the cytoplasm. The catalysed reaction is tRNA(Pro) + L-proline + ATP = L-prolyl-tRNA(Pro) + AMP + diphosphate. Its function is as follows. Catalyzes the attachment of proline to tRNA(Pro) in a two-step reaction: proline is first activated by ATP to form Pro-AMP and then transferred to the acceptor end of tRNA(Pro). This Mycoplasma mycoides subsp. mycoides SC (strain CCUG 32753 / NCTC 10114 / PG1) protein is Proline--tRNA ligase.